The following is a 354-amino-acid chain: MVNTQAREDLHIRLEETQLLDRDCTTLSRHVLQQLHFSPDAQDISSLMNRIGLAGKLIARRLTRAGLLEDTLGFTGTVNVQGESVKKMDIYANDVFISVFKQSGLVCRLASEEMEKPYYIPENCPIGRYTLLYDPLDGSSNLDTNLNVGSIFSVRQQEGNDENGLAQDLLQNGHKQIAAGYILYGPSTMLVYSIGQGVHAFTLDPSLGEFILVNENIKIPEHGPVYSVNEGNFWQWDDSMRDYIRYVHRHEGYTARYGGALVGDFHRILYQGGVFLYPGTVKKPEGKLRLLYESAPMGYLVEQAGGRASTGTEEILDVVADQLHQRTPLIIGSKEDVALVESFIKEQKRISNQG.

Positions 112, 134, 136, and 137 each coordinate Mg(2+). Substrate contacts are provided by residues 137–140, N229, Y257, and K287; that span reads DGSS. E293 provides a ligand contact to Mg(2+).

It belongs to the FBPase class 1 family. In terms of assembly, homotetramer. It depends on Mg(2+) as a cofactor.

Its subcellular location is the cytoplasm. It carries out the reaction beta-D-fructose 1,6-bisphosphate + H2O = beta-D-fructose 6-phosphate + phosphate. It participates in carbohydrate biosynthesis; Calvin cycle. The sequence is that of Fructose-1,6-bisphosphatase class 1 from Trichodesmium erythraeum (strain IMS101).